The chain runs to 101 residues: NAD(P)H-quinone oxidoreductase subunit 4L, chloroplastic (101 aa).

A run of 3 helical transmembrane segments spans residues 2 to 22 (MLEY…YGLI), 32 to 52 (MCLE…SDFF), and 61 to 81 (ILSI…PAIV).

It belongs to the complex I subunit 4L family. In terms of assembly, NDH is composed of at least 16 different subunits, 5 of which are encoded in the nucleus.

It is found in the plastid. The protein localises to the chloroplast thylakoid membrane. The enzyme catalyses a plastoquinone + NADH + (n+1) H(+)(in) = a plastoquinol + NAD(+) + n H(+)(out). It catalyses the reaction a plastoquinone + NADPH + (n+1) H(+)(in) = a plastoquinol + NADP(+) + n H(+)(out). Its function is as follows. NDH shuttles electrons from NAD(P)H:plastoquinone, via FMN and iron-sulfur (Fe-S) centers, to quinones in the photosynthetic chain and possibly in a chloroplast respiratory chain. The immediate electron acceptor for the enzyme in this species is believed to be plastoquinone. Couples the redox reaction to proton translocation, and thus conserves the redox energy in a proton gradient. This is NAD(P)H-quinone oxidoreductase subunit 4L, chloroplastic from Populus alba (White poplar).